The following is a 140-amino-acid chain: Seminal plasma protein A3 (140 aa).

The N-terminal stretch at 1–25 (MALRLGLFLIWAGVSMFLQLDPVNG) is a signal peptide. Fibronectin type-II domains are found at residues 49-93 (TKDN…YCTK) and 94-140 (NDYA…WKYC). 4 cysteine pairs are disulfide-bonded: cysteine 54-cysteine 78, cysteine 68-cysteine 91, cysteine 99-cysteine 125, and cysteine 113-cysteine 140.

Belongs to the seminal plasma protein family.

It localises to the secreted. Its function is as follows. The BSP-A proteins from seminal plasma exhibit both simulatory and inhibitory actions on the release of pituitary gonadotropins. The exact function of these proteins is not known. This chain is Seminal plasma protein A3, found in Bos taurus (Bovine).